The sequence spans 241 residues: Copper transport protein CTR3 (241 aa).

The Lumenal portion of the chain corresponds to 1–41; the sequence is MNMGGSSSTAAKKATCKISMLWNWYTIDTCFIARSWRNDTK. A helical transmembrane segment spans residues 42-62; that stretch reads GKFAGSCIGCFALVVVAQWLT. Topologically, residues 63–159 are cytoplasmic; the sequence is RFSRQFDVEL…SCCTLITPVD (97 aa). The chain crosses the membrane as a helical span at residues 160 to 180; sequence LYPTFLDHMIRVTIFVLQWGL. The Lumenal portion of the chain corresponds to 181–182; sequence SY. Residues 183-203 traverse the membrane as a helical segment; that stretch reads IIMLLFMYYNGYIIISCLIGA. Over 204 to 241 the chain is Cytoplasmic; the sequence is IVGRFIFCYEPLGSLGANGSAQGTVSYDKESDDRKCCL.

The protein belongs to the copper transporter (Ctr) (TC 1.A.56) family. SLC31A subfamily.

It localises to the cytoplasmic vesicle membrane. Its function is as follows. Required for high affinity copper (probably reduced Cu I) transport into the cell. This chain is Copper transport protein CTR3 (CTR3), found in Saccharomyces cerevisiae (strain ATCC 204508 / S288c) (Baker's yeast).